Consider the following 77-residue polypeptide: Defensin-like protein 4 (77 aa).

An N-terminal signal peptide occupies residues 1-30 (MKFSMRLISAVLFLVMIFVATGMGPVTVEA). 4 cysteine pairs are disulfide-bonded: cysteine 33/cysteine 77, cysteine 44/cysteine 64, cysteine 50/cysteine 71, and cysteine 54/cysteine 73.

The protein belongs to the DEFL family. In terms of tissue distribution, expressed in roots, siliques and seeds.

It localises to the secreted. Functionally, confers broad-spectrum resistance to pathogens. The polypeptide is Defensin-like protein 4 (PDF2.1) (Arabidopsis thaliana (Mouse-ear cress)).